We begin with the raw amino-acid sequence, 313 residues long: UDP-N-acetylglucosamine 3-dehydrogenase (313 aa).

3 residues coordinate NAD(+): His-13, Leu-14, and Arg-38.

Belongs to the Gfo/Idh/MocA family. In terms of assembly, exists in multiple oligomeric states.

It carries out the reaction UDP-N-acetyl-alpha-D-glucosamine + NAD(+) = UDP-2-acetamido-3-dehydro-2-deoxy-alpha-D-glucopyranose + NADH + H(+). The protein operates within bacterial outer membrane biogenesis; LPS lipid A biosynthesis. Functionally, oxidoreductase involved in the synthesis of 2,3-diamino-2,3-dideoxy-D-glucopyranose (GlcN3N), which is a component of lipid A in some species. Catalyzes the NAD(+)-dependent oxidation of the glucosamine 3-position of UDP-N-acetyl-glucosamine (UDP-GlcNAc) to a ketone moiety, forming UDP-2-acetamido-3-dehydro-2-deoxy-alpha-D-glucopyranose (UDP-3-oxo-GlcNAc). Is specific for UDP-GlcNAc, no activity is observed with UDP-glucose (UDP-Glc), UDP-glucoronic acid (UDP-GlcA), UDP-galactose (UDP-Gal) and UDP-N-acetylgalactosamine (UDP-GalNAc). Cannot use FAD(+) and NADP(+). The chain is UDP-N-acetylglucosamine 3-dehydrogenase from Acidithiobacillus ferrooxidans (strain ATCC 23270 / DSM 14882 / CIP 104768 / NCIMB 8455) (Ferrobacillus ferrooxidans (strain ATCC 23270)).